The primary structure comprises 105 residues: Large ribosomal subunit protein uL24 (105 aa).

The tract at residues H67–I105 is disordered.

Belongs to the universal ribosomal protein uL24 family. As to quaternary structure, part of the 50S ribosomal subunit.

Functionally, one of two assembly initiator proteins, it binds directly to the 5'-end of the 23S rRNA, where it nucleates assembly of the 50S subunit. Its function is as follows. One of the proteins that surrounds the polypeptide exit tunnel on the outside of the subunit. This Bacteroides thetaiotaomicron (strain ATCC 29148 / DSM 2079 / JCM 5827 / CCUG 10774 / NCTC 10582 / VPI-5482 / E50) protein is Large ribosomal subunit protein uL24.